Here is a 309-residue protein sequence, read N- to C-terminus: Calponin-2 (309 aa).

An N-acetylserine modification is found at S2. N6-acetyllysine is present on residues K8 and K25. Positions 28–132 (PQKEAELRSW…SLLALAGKAK (105 aa)) constitute a Calponin-homology (CH) domain. S138 is subject to Phosphoserine. Calponin-like repeat units lie at residues 166–191 (IGLQ…RHLY), 206–231 (ISLQ…RHIY), and 245–269 (MSLQ…RQIY). The segment at 273-309 (YCPQGPAADGAPAAAGDGPGPGEPSECPPYYQEEAGY) is disordered. Low complexity predominate over residues 277–288 (GPAADGAPAAAG).

Belongs to the calponin family.

In terms of biological role, thin filament-associated protein that is implicated in the regulation and modulation of smooth muscle contraction. It is capable of binding to actin, calmodulin and tropomyosin. The interaction of calponin with actin inhibits the actomyosin Mg-ATPase activity. The sequence is that of Calponin-2 (CNN2) from Bos taurus (Bovine).